The chain runs to 305 residues: Nucleotide-binding protein Saro_2904 (305 aa).

15–22 (GLLGAGKT) contacts ATP. 68 to 71 (DTRT) serves as a coordination point for GTP.

It belongs to the RapZ-like family.

Displays ATPase and GTPase activities. The polypeptide is Nucleotide-binding protein Saro_2904 (Novosphingobium aromaticivorans (strain ATCC 700278 / DSM 12444 / CCUG 56034 / CIP 105152 / NBRC 16084 / F199)).